A 227-amino-acid chain; its full sequence is Guanylate kinase (227 aa).

Residues 21–199 (GNLFMVVAPS…ALAELECIVA (179 aa)) form the Guanylate kinase-like domain. Position 28 to 35 (28 to 35 (APSGAGKS)) interacts with ATP.

This sequence belongs to the guanylate kinase family.

The protein localises to the cytoplasm. It carries out the reaction GMP + ATP = GDP + ADP. Essential for recycling GMP and indirectly, cGMP. This chain is Guanylate kinase, found in Burkholderia orbicola (strain AU 1054).